Here is a 418-residue protein sequence, read N- to C-terminus: Probable serine hydroxymethyltransferase (418 aa).

(6S)-5,6,7,8-tetrahydrofolate contacts are provided by residues leucine 118 and 122-124 (GHL). An N6-(pyridoxal phosphate)lysine modification is found at lysine 226. 351–353 (SPF) is a (6S)-5,6,7,8-tetrahydrofolate binding site.

It belongs to the SHMT family. As to quaternary structure, homodimer. Pyridoxal 5'-phosphate is required as a cofactor.

Its subcellular location is the cytoplasm. It catalyses the reaction (6R)-5,10-methylene-5,6,7,8-tetrahydrofolate + glycine + H2O = (6S)-5,6,7,8-tetrahydrofolate + L-serine. It functions in the pathway one-carbon metabolism; tetrahydrofolate interconversion. Its function is as follows. Catalyzes the reversible interconversion of serine and glycine with tetrahydrofolate (THF) serving as the one-carbon carrier. This reaction serves as the major source of one-carbon groups required for the biosynthesis of purines, thymidylate, methionine, and other important biomolecules. The polypeptide is Probable serine hydroxymethyltransferase (Mesomycoplasma hyopneumoniae (strain J / ATCC 25934 / NCTC 10110) (Mycoplasma hyopneumoniae)).